The primary structure comprises 284 residues: Anaerobic dimethyl sulfoxide reductase chain YnfH (284 aa).

Residues 1 to 9 (MGNGWHEWP) lie on the Periplasmic side of the membrane. Residues 10 to 30 (LVIFTVLGQCVVGALIVSGIG) traverse the membrane as a helical segment. Over 31 to 45 (WFAAKNDADRQRIVR) the chain is Cytoplasmic. A helical transmembrane segment spans residues 46 to 66 (GMFFLWLLMGVGFIASVMHLG). The Periplasmic segment spans residues 67-86 (SPLRAFNSLNRIGASGLSNE). The chain crosses the membrane as a helical span at residues 87 to 107 (IAAGSIFFAVGGLWWLVAVIG). Residues 108-115 (KMPQALGK) are Cytoplasmic-facing. A helical membrane pass occupies residues 116 to 136 (LWLLFSMALGVIFVWMMTCVY). Residues 137 to 148 (QIDTVPTWHNGY) lie on the Periplasmic side of the membrane. Residues 149–169 (TTLAFFLTVLLSGPILAAAIL) form a helical membrane-spanning segment. Topologically, residues 170–180 (RAARVTFNTTP) are cytoplasmic. Residues 181 to 201 (FAIISVLALIACAGVIVLQGL) traverse the membrane as a helical segment. Topologically, residues 202-222 (SLASIHSSVQQASALVPDYAS) are periplasmic. Residues 223–243 (LQVWRVVLLCAGLGCWLCPLI) form a helical membrane-spanning segment. Residues 244 to 250 (RRREPHV) are Cytoplasmic-facing. A helical transmembrane segment spans residues 251 to 271 (AGLILGLILILGGEMIGRVLF). Residues 272–284 (YGLHMTVGMAIAG) are Periplasmic-facing.

Belongs to the DmsC family. As to quaternary structure, the complex consists of three subunits: YnfF, the reductase; YnfG, an electron transfer protein, and YnfH, a membrane anchor protein.

Its subcellular location is the cell inner membrane. Its function is as follows. Terminal reductase during anaerobic growth on various sulfoxide and N-oxide compounds. The C subunit anchors the other two subunits to the membrane and stabilize the catalytic subunits. The chain is Anaerobic dimethyl sulfoxide reductase chain YnfH (ynfH) from Escherichia coli (strain K12).